The primary structure comprises 416 residues: MSGRRELCTPLRTIMTPGPVEVDPRVLRVMSTPVVGQFDPAFTGIMNETMEMLRELFQTKNRWAYPIDGTSRAGIEAVLASVIEPEDDVLIPIYGRFGYLLTEIAERYGANVHMLECEWGTVFDPEDIIREIKKVKPKIVAMVHGETSTGRIHPLKAIGEACRTEDALFIVDAVATIGGCEVKVDEWKIDAAIGGTQKCLSVPSGMAPITYNERVADVIAARKKVERGIATQADRAALSGNRPITSNYFDLSQLEDYWSERRLNHHTEATTMLYALREGVRLVLEEGLETRFERHRHHEAALAAGIKAMGLRLFGDDSCKMPVVTCVEIPGGIDGESVRDMLLAQFGIEIASSFGPLAGKIWRIGTMGYSCRKENVLFVLAGLEAVLLRHNAGIEAGKALQAALDVYENAGRQAAV.

Lys-198 carries the N6-(pyridoxal phosphate)lysine modification.

The protein belongs to the class-V pyridoxal-phosphate-dependent aminotransferase family. Homodimer. Requires pyridoxal 5'-phosphate as cofactor.

It catalyses the reaction (S)-2-ureidoglycine + glyoxylate = N-carbamoyl-2-oxoglycine + glycine. It functions in the pathway nitrogen metabolism; (S)-allantoin degradation. Catalyzes the transamination between an unstable intermediate ((S)-ureidoglycine) and the end product of purine catabolism (glyoxylate) to yield oxalurate and glycine. Glyoxylate is the preferred substrate, but other amino-group acceptors can be used. This chain is (S)-ureidoglycine--glyoxylate transaminase, found in Bacillus subtilis (strain 168).